A 195-amino-acid polypeptide reads, in one-letter code: Cysteine/O-acetylserine efflux protein (195 aa).

Residues 1–7 (MTPTLLS) are Periplasmic-facing. The helical transmembrane segment at 8-28 (AFWTYTLITAMTPGPNNILAL) threads the bilayer. Residues 29–46 (SSATTHGFHQSTRVLAGM) lie on the Cytoplasmic side of the membrane. The chain crosses the membrane as a helical span at residues 47-67 (SLGFLIVMLLCAGISFSLAVI). Residues 68-69 (DP) lie on the Periplasmic side of the membrane. A helical membrane pass occupies residues 70–90 (AAVHLLSWAGAAYIVWLAWKI). Residues 91-104 (ATSPTKEDGLQTKP) lie on the Cytoplasmic side of the membrane. The chain crosses the membrane as a helical span at residues 105 to 125 (ISFWASFALQFVNVKIILYGV). At 126–141 (TALSTFVLPQTQALSW) the chain is on the periplasmic side. Residues 142-162 (IVGVSVLLAMIGTFGNVCWAL) form a helical membrane-spanning segment. At 163-176 (AGHLFQRLFRQYGR) the chain is on the cytoplasmic side. A helical transmembrane segment spans residues 177 to 194 (QLNIVLALLLIYCAVRIF). Residue Tyr195 is a topological domain, periplasmic.

This sequence belongs to the Rht family.

It localises to the cell inner membrane. It catalyses the reaction O-acetyl-L-serine(in) = O-acetyl-L-serine(out). It carries out the reaction L-cysteine(in) = L-cysteine(out). Exporter of O-acetylserine (OAS) and cysteine. The chain is Cysteine/O-acetylserine efflux protein (eamB) from Escherichia coli O157:H7.